Here is a 503-residue protein sequence, read N- to C-terminus: Capsanthin/capsorubin synthase, chromoplastic (503 aa).

88 to 117 (VIIIGTGPAGLRLAEQVSSRHSVKVCCVDP) lines the NAD(+) pocket.

The protein belongs to the lycopene cyclase family.

It is found in the plastid. The protein localises to the chromoplast. It catalyses the reaction all-trans-violaxanthin = all-trans-capsorubin. The enzyme catalyses all-trans-antheraxanthin = all-trans-capsanthin. Its pathway is carotenoid biosynthesis; capsanthin biosynthesis; capsanthin from antheraxanthin: step 1/1. It participates in carotenoid biosynthesis; capsorubin biosynthesis; capsorubin from violaxanthin: step 1/1. Its function is as follows. Catalyzes the conversion of the ubiquitous 5,6-epoxycarotenoids, antheraxanthin and violaxanthin, into capsanthin and capsorubin, respectively. In Citrus sinensis (Sweet orange), this protein is Capsanthin/capsorubin synthase, chromoplastic (CCS).